The primary structure comprises 550 residues: Carnitine transporter (550 aa).

Helical transmembrane passes span 15–35 (FLAV…AIYS), 53–73 (FTTP…GLAF), 92–112 (SWIF…WGFL), 137–157 (VAYS…LASI), 196–216 (MFLL…AVTF), 230–250 (FMTK…SSYV), 263–283 (VCLG…TQFI), 317–337 (WTVF…LFVT), 347–367 (EVIF…FGVF), 401–421 (LLPA…VFLA), 451–471 (LFWC…KAPL), and 477–497 (ATIV…YGLV).

The protein belongs to the BCCT transporter (TC 2.A.15) family.

Its subcellular location is the cell inner membrane. Inhibited by the protonophore 3,3',4',5-tetrachlorosalicylanilide (TCS). Not activated by osmolarity. In terms of biological role, catalyzes the energy-dependent uptake of carnitine and is essential for growth on carnitine. Can also mediate the uptake of choline. Is probably a proton:substrate symporter. This is Carnitine transporter from Acinetobacter baumannii (strain ATCC 19606 / DSM 30007 / JCM 6841 / CCUG 19606 / CIP 70.34 / NBRC 109757 / NCIMB 12457 / NCTC 12156 / 81).